Here is a 448-residue protein sequence, read N- to C-terminus: Adenylosuccinate synthetase (448 aa).

Residues 36 to 42 (GDEGKGK) and 64 to 66 (GHT) contribute to the GTP site. Asp37 serves as the catalytic Proton acceptor. Positions 37 and 64 each coordinate Mg(2+). IMP is bound by residues 37 to 40 (DEGK), 62 to 65 (NAGH), Thr154, Arg168, Asn246, Thr261, and Arg325. His65 serves as the catalytic Proton donor. 321–327 (VTTKRKR) serves as a coordination point for substrate. GTP contacts are provided by residues Arg327, 353-355 (KLD), and 436-438 (GVG).

This sequence belongs to the adenylosuccinate synthetase family. Homodimer. It depends on Mg(2+) as a cofactor.

Its subcellular location is the cytoplasm. It carries out the reaction IMP + L-aspartate + GTP = N(6)-(1,2-dicarboxyethyl)-AMP + GDP + phosphate + 2 H(+). It participates in purine metabolism; AMP biosynthesis via de novo pathway; AMP from IMP: step 1/2. Plays an important role in the de novo pathway and in the salvage pathway of purine nucleotide biosynthesis. Catalyzes the first committed step in the biosynthesis of AMP from IMP. The chain is Adenylosuccinate synthetase from Drosophila persimilis (Fruit fly).